Reading from the N-terminus, the 104-residue chain is ATP-dependent Clp protease adapter protein ClpS (104 aa).

Belongs to the ClpS family. In terms of assembly, binds to the N-terminal domain of the chaperone ClpA.

Its function is as follows. Involved in the modulation of the specificity of the ClpAP-mediated ATP-dependent protein degradation. The chain is ATP-dependent Clp protease adapter protein ClpS from Burkholderia mallei (strain NCTC 10247).